The following is a 290-amino-acid chain: Porphobilinogen deaminase (290 aa).

Cys-237 is subject to S-(dipyrrolylmethanemethyl)cysteine.

Belongs to the HMBS family. Monomer. Dipyrromethane is required as a cofactor.

It catalyses the reaction 4 porphobilinogen + H2O = hydroxymethylbilane + 4 NH4(+). It functions in the pathway porphyrin-containing compound metabolism; protoporphyrin-IX biosynthesis; coproporphyrinogen-III from 5-aminolevulinate: step 2/4. Its function is as follows. Tetrapolymerization of the monopyrrole PBG into the hydroxymethylbilane pre-uroporphyrinogen in several discrete steps. The sequence is that of Porphobilinogen deaminase from Clostridium kluyveri (strain NBRC 12016).